A 158-amino-acid polypeptide reads, in one-letter code: MQGTLSVWLAKRGLIHRSLGFDYQGIETLQIKPEDWHSIAVILYVYGYNYLRSQCAYDVAPGGLLASVYHLTRIEYGVNPAEEVCIKVFTHRSNPRIPSVFWVWKSTDFQERESYDMLGITYDSHPRLKRILMPESWIGWPLRKDYIAPNFYEIQDAY.

This sequence belongs to the complex I 30 kDa subunit family. In terms of assembly, NDH is composed of at least 16 different subunits, 5 of which are encoded in the nucleus.

Its subcellular location is the plastid. It localises to the chloroplast thylakoid membrane. It carries out the reaction a plastoquinone + NADH + (n+1) H(+)(in) = a plastoquinol + NAD(+) + n H(+)(out). It catalyses the reaction a plastoquinone + NADPH + (n+1) H(+)(in) = a plastoquinol + NADP(+) + n H(+)(out). In terms of biological role, NDH shuttles electrons from NAD(P)H:plastoquinone, via FMN and iron-sulfur (Fe-S) centers, to quinones in the photosynthetic chain and possibly in a chloroplast respiratory chain. The immediate electron acceptor for the enzyme in this species is believed to be plastoquinone. Couples the redox reaction to proton translocation, and thus conserves the redox energy in a proton gradient. In Capsella bursa-pastoris (Shepherd's purse), this protein is NAD(P)H-quinone oxidoreductase subunit J, chloroplastic.